Here is a 371-residue protein sequence, read N- to C-terminus: MPHHYILTLFGLLPVATNISTWWNFGSMLLTCLALQVLTGFFLAVHYTANINLAFSSIIHITRDVPYGWMMQNLHAIGASMFFICIYIHIARGLYYGSYLNKETWMSGITLLITLMATAFFGYVLPWGQMSFWAATVITNLLTAIPYLGTSLTTWLWGGFAINDPTLTRFFALHFILPFAIISLSSLHIILLHEEGSSNPLGTNPDIDKIPFHPYHSYKDLLLLTLMILFLFIIVSFFPDIFNDPDNFSKANPLVTPQHIKPEWYFLFAYGILRSIPNKLGGALALVMSIMILFTIPFMHTAHLRPMTFRPLSQLMFWTLVSTFITITWAATKPVEPPYIMISQMTATLYFTFFLSIPILGWMENKMMNIP.

4 helical membrane passes run 25–45 (FGSM…FLAV), 69–90 (WMMQ…YIHI), 105–125 (WMSG…GYVL), and 170–190 (FFAL…LHII). The heme b site is built by His-75 and His-89. Heme b is bound by residues His-174 and His-188. An a ubiquinone-binding site is contributed by His-193. The next 4 helical transmembrane spans lie at 218–238 (YKDL…VSFF), 280–300 (LGGA…PFMH), 312–332 (LSQL…WAAT), and 339–358 (YIMI…LSIP).

Belongs to the cytochrome b family. The cytochrome bc1 complex contains 3 respiratory subunits (MT-CYB, CYC1 and UQCRFS1), 2 core proteins (UQCRC1 and UQCRC2) and probably 6 low-molecular weight proteins. Requires heme b as cofactor.

It localises to the mitochondrion inner membrane. Component of the ubiquinol-cytochrome c reductase complex (complex III or cytochrome b-c1 complex) that is part of the mitochondrial respiratory chain. The b-c1 complex mediates electron transfer from ubiquinol to cytochrome c. Contributes to the generation of a proton gradient across the mitochondrial membrane that is then used for ATP synthesis. In Simalia amethistina (Amethystine python), this protein is Cytochrome b (MT-CYB).